A 395-amino-acid polypeptide reads, in one-letter code: Thyroid hormone receptor beta (395 aa).

The tract at residues M1–L31 is modulating. Positions D29–D106 form a DNA-binding region, nuclear receptor. C32, C35, C49, C52, C70, C76, C86, and C89 together coordinate Zn(2+). NR C4-type zinc fingers lie at residues C32–C52 and C70–C89. The NR LBD domain occupies E142 to D395. R216, N265, and H369 together coordinate 3,3',5-triiodo-L-thyronine.

The protein belongs to the nuclear hormone receptor family. NR1 subfamily. In terms of assembly, interacts (via the ligand-binding domain) with ncoa2. In terms of tissue distribution, widely expressed in a range of adult tissues including the brain, eye, fin, gill, intestine, liver, swim bladder and ovary. In the eye, expressed in the outer nuclear layer of the retina.

It localises to the nucleus. In terms of biological role, nuclear hormone receptor that can act as a repressor or activator of transcription. High affinity receptor for the thyroid gland hormone triiodothyronine (T3). Transactivating activity is ligand-dependent, and is repressed in the absence of T3. The chain is Thyroid hormone receptor beta (thrb) from Danio rerio (Zebrafish).